Reading from the N-terminus, the 168-residue chain is Small ribosomal subunit protein uS8 (168 aa).

Positions 59-93 (EEFKKMKELAEKSPNPKMRRYLQQLIDYNKGTQYP) are not found in other S8 sequences.

Belongs to the universal ribosomal protein uS8 family. As to quaternary structure, part of the 30S ribosomal subunit. Contacts proteins S5 and S12.

One of the primary rRNA binding proteins, it binds directly to 16S rRNA central domain where it helps coordinate assembly of the platform of the 30S subunit. The chain is Small ribosomal subunit protein uS8 from Aquifex pyrophilus.